A 788-amino-acid polypeptide reads, in one-letter code: Glucan 1,3-beta-glucosidase (788 aa).

An N-terminal signal peptide occupies residues 1–42; sequence MRFSSLLACLGAVGIQAAAIPFQRRVDNTTDSGSLDAAQAAA. N-linked (GlcNAc...) asparagine glycans are attached at residues Asn-28, Asn-233, Asn-381, and Asn-773.

Belongs to the glycosyl hydrolase 55 family.

The catalysed reaction is Successive hydrolysis of beta-D-glucose units from the non-reducing ends of (1-&gt;3)-beta-D-glucans, releasing alpha-glucose.. The polypeptide is Glucan 1,3-beta-glucosidase (EXG1) (Cochliobolus carbonum (Maize leaf spot fungus)).